The primary structure comprises 194 residues: Ion-translocating oxidoreductase complex subunit B (194 aa).

Residues 1-26 (MSSILIAVIAIAALALVFGLILGFAS) form a hydrophobic region. The region spanning 32 to 90 (ESDPIVEQIDAILPQTQCGQCGYPGCKPYAEAIANGDMINKCPPGGQATIEKLADLMGV) is the 4Fe-4S domain. Residues Cys49, Cys52, Cys57, Cys73, Cys114, Cys117, Cys120, Cys124, Cys144, Cys147, Cys150, and Cys154 each coordinate [4Fe-4S] cluster. 4Fe-4S ferredoxin-type domains follow at residues 105-134 (KVAF…GGTK) and 135-164 (ALHT…MIPV).

The protein belongs to the 4Fe4S bacterial-type ferredoxin family. RnfB subfamily. In terms of assembly, the complex is composed of six subunits: RnfA, RnfB, RnfC, RnfD, RnfE and RnfG. It depends on [4Fe-4S] cluster as a cofactor.

The protein resides in the cell inner membrane. Its function is as follows. Part of a membrane-bound complex that couples electron transfer with translocation of ions across the membrane. This is Ion-translocating oxidoreductase complex subunit B from Aliivibrio fischeri (strain ATCC 700601 / ES114) (Vibrio fischeri).